Consider the following 291-residue polypeptide: Undecaprenyl-diphosphatase (291 aa).

8 helical membrane-spanning segments follow: residues 1–21 (MFII…LTEF), 48–68 (SAFT…AWVF), 102–122 (LHVL…DDFI), 126–146 (LFSV…MIIA), 162–182 (INYF…WPGF), 203–223 (SDFT…LSLL), 231–251 (IADI…GLIA), and 267–287 (FAIY…GFGI).

Belongs to the UppP family.

The protein resides in the cell membrane. It catalyses the reaction di-trans,octa-cis-undecaprenyl diphosphate + H2O = di-trans,octa-cis-undecaprenyl phosphate + phosphate + H(+). Functionally, catalyzes the dephosphorylation of undecaprenyl diphosphate (UPP). Confers resistance to bacitracin. This is Undecaprenyl-diphosphatase from Staphylococcus aureus (strain bovine RF122 / ET3-1).